Here is a 345-residue protein sequence, read N- to C-terminus: Protein GAMETE CELL DEFECTIVE 1, mitochondrial (345 aa).

The transit peptide at 1-43 (MLALRKTLLHGRLPAAPPAAAAAAIASRIPALLRRLSSSPGDG) directs the protein to the mitochondrion. Residues 36–81 (LSSSPGDGQGGDEWGSSWSTGITKEHFDGSDAAVGRPVTSPSKPVS) are disordered.

Expressed in roots, stems, leaves and florets.

The protein localises to the mitochondrion. Essential for fertility (male and female gametophyte functions and development). Required for the integrity of female gametic mitochondria. Involved in embryo apical-basal patterning, and particularly dorsal-ventral patterning, during early embryogenesis, and endosperm free nucleus positioning and development as well as early endosperm development, probably by modulating the expression pattern of related genes (e.g. AL1, MYB3/AL2, CYP78A13/GE, PNH1, HAZ1, MPK6 and OSH1). Has function in triggering of endosperm programmed cell death (PCD) leading to syncytial endosperm cellularization and starchy endosperm cell maturation. Implicated in central vacuole dynamics necessary for microspore development leading to pollen production, and for pollen development and germination. The protein is Protein GAMETE CELL DEFECTIVE 1, mitochondrial of Oryza sativa subsp. japonica (Rice).